Consider the following 401-residue polypeptide: Argininosuccinate synthase (401 aa).

8 to 16 (AYSGGLDTS) is a binding site for ATP. Y85 serves as a coordination point for L-citrulline. An ATP-binding site is contributed by G115. Positions 117, 121, and 122 each coordinate L-aspartate. N121 contacts L-citrulline. R125, S173, E258, and Y270 together coordinate L-citrulline.

The protein belongs to the argininosuccinate synthase family. Type 1 subfamily. As to quaternary structure, homotetramer.

The protein localises to the cytoplasm. It carries out the reaction L-citrulline + L-aspartate + ATP = 2-(N(omega)-L-arginino)succinate + AMP + diphosphate + H(+). It participates in amino-acid biosynthesis; L-arginine biosynthesis; L-arginine from L-ornithine and carbamoyl phosphate: step 2/3. The sequence is that of Argininosuccinate synthase from Staphylococcus aureus (strain MRSA252).